The following is a 257-amino-acid chain: Glucose-1-phosphate cytidylyltransferase (257 aa).

Substrate contacts are provided by residues 6-10, 11-13, Lys23, Ser104, Arg109, and Gly128; these read LAGGL and GTR. Residues Asp129 and Asp234 each contribute to the Mg(2+) site.

Belongs to the glucose-1-phosphate cytidylyltransferase family. As to quaternary structure, homohexamer. Requires Mg(2+) as cofactor.

The enzyme catalyses alpha-D-glucose 1-phosphate + CTP + H(+) = CDP-D-glucose + diphosphate. The protein operates within nucleotide-sugar biosynthesis; CDP-3,6-dideoxy-D-mannose biosynthesis; CDP-3,6-dideoxy-D-mannose from CTP and alpha-D-glucose 1-phosphate: step 1/5. It functions in the pathway bacterial outer membrane biogenesis; LPS O-antigen biosynthesis. In terms of biological role, involved in the biosynthesis of the tyvelose, a 3,6-dideoxyhexose found in the O-antigen of the surface lipopolysaccharides. It catalyzes the transfer of a CMP moiety from CTP to glucose 1-phosphate. The sequence is that of Glucose-1-phosphate cytidylyltransferase (rfbF) from Salmonella typhimurium (strain LT2 / SGSC1412 / ATCC 700720).